The chain runs to 345 residues: Eukaryotic translation initiation factor 3 subunit F (345 aa).

Positions 30–166 constitute an MPN domain; it reads VVIQPQALFS…TRAYISAPVG (137 aa). The segment at 308–345 is disordered; the sequence is GGESGSTESGQRGGQRGGKGGRGGQQRNQERSGEEVRA. A compositionally biased stretch (gly residues) spans 318 to 331; the sequence is QRGGQRGGKGGRGG. A compositionally biased stretch (basic and acidic residues) spans 335–345; the sequence is NQERSGEEVRA.

This sequence belongs to the eIF-3 subunit F family. In terms of assembly, component of the eukaryotic translation initiation factor 3 (eIF-3) complex.

The protein resides in the cytoplasm. In terms of biological role, component of the eukaryotic translation initiation factor 3 (eIF-3) complex, which is involved in protein synthesis of a specialized repertoire of mRNAs and, together with other initiation factors, stimulates binding of mRNA and methionyl-tRNAi to the 40S ribosome. The eIF-3 complex specifically targets and initiates translation of a subset of mRNAs involved in cell proliferation. This is Eukaryotic translation initiation factor 3 subunit F from Aspergillus terreus (strain NIH 2624 / FGSC A1156).